Reading from the N-terminus, the 99-residue chain is Acylphosphatase-1 (99 aa).

N-acetylalanine is present on A2. Positions 9-99 constitute an Acylphosphatase-like domain; sequence SVDYEIFGKV…LDYSDFQIVK (91 aa). Residues R24 and N42 contribute to the active site.

The protein belongs to the acylphosphatase family.

It carries out the reaction an acyl phosphate + H2O = a carboxylate + phosphate + H(+). The sequence is that of Acylphosphatase-1 (Acyp1) from Mus musculus (Mouse).